We begin with the raw amino-acid sequence, 197 residues long: Holliday junction branch migration complex subunit RuvA (197 aa).

The interval 1–64 (MYEYIKGKYI…EDFIGVYGFL (64 aa)) is domain I. Residues 65-144 (TKDELSMFKL…DILEEDDEQI (80 aa)) are domain II. The tract at residues 145–149 (INKVT) is flexible linker. The interval 149 to 197 (TDDKKVLEAVAALVTLGYSEKEANKVINSCDKNNSLEQIIKEALKYLMK) is domain III.

It belongs to the RuvA family. In terms of assembly, homotetramer. Forms an RuvA(8)-RuvB(12)-Holliday junction (HJ) complex. HJ DNA is sandwiched between 2 RuvA tetramers; dsDNA enters through RuvA and exits via RuvB. An RuvB hexamer assembles on each DNA strand where it exits the tetramer. Each RuvB hexamer is contacted by two RuvA subunits (via domain III) on 2 adjacent RuvB subunits; this complex drives branch migration. In the full resolvosome a probable DNA-RuvA(4)-RuvB(12)-RuvC(2) complex forms which resolves the HJ.

It localises to the cytoplasm. Its function is as follows. The RuvA-RuvB-RuvC complex processes Holliday junction (HJ) DNA during genetic recombination and DNA repair, while the RuvA-RuvB complex plays an important role in the rescue of blocked DNA replication forks via replication fork reversal (RFR). RuvA specifically binds to HJ cruciform DNA, conferring on it an open structure. The RuvB hexamer acts as an ATP-dependent pump, pulling dsDNA into and through the RuvAB complex. HJ branch migration allows RuvC to scan DNA until it finds its consensus sequence, where it cleaves and resolves the cruciform DNA. In Clostridium botulinum (strain Kyoto / Type A2), this protein is Holliday junction branch migration complex subunit RuvA.